The chain runs to 122 residues: MTSPEIASLSWGQMKVKGSNTTYKDCKVWPGGSRTWDWRETGTEHSPGVQPADVKEVVEKGVQTLVIGRGMSEALKVPSSTVEYLKKHGIDVRVLQTEQAVKEYNALVAQGVRVGGVFHSTC.

The interval 6 to 122 is MTH138-like domain; that stretch reads IASLSWGQMK…RVGGVFHSTC (117 aa).

This sequence belongs to the AAMDC family.

The protein resides in the cytoplasm. May play a role in preadipocyte differentiation and adipogenesis. This Homo sapiens (Human) protein is Mth938 domain-containing protein (AAMDC).